The chain runs to 362 residues: UDP-N-acetylglucosamine--N-acetylmuramyl-(pentapeptide) pyrophosphoryl-undecaprenol N-acetylglucosamine transferase (362 aa).

Residues 15-17 (TGG), asparagine 127, arginine 165, serine 191, isoleucine 247, 266-271 (ALTVSE), and glutamine 292 contribute to the UDP-N-acetyl-alpha-D-glucosamine site.

This sequence belongs to the glycosyltransferase 28 family. MurG subfamily.

It localises to the cell inner membrane. It catalyses the reaction di-trans,octa-cis-undecaprenyl diphospho-N-acetyl-alpha-D-muramoyl-L-alanyl-D-glutamyl-meso-2,6-diaminopimeloyl-D-alanyl-D-alanine + UDP-N-acetyl-alpha-D-glucosamine = di-trans,octa-cis-undecaprenyl diphospho-[N-acetyl-alpha-D-glucosaminyl-(1-&gt;4)]-N-acetyl-alpha-D-muramoyl-L-alanyl-D-glutamyl-meso-2,6-diaminopimeloyl-D-alanyl-D-alanine + UDP + H(+). It participates in cell wall biogenesis; peptidoglycan biosynthesis. Cell wall formation. Catalyzes the transfer of a GlcNAc subunit on undecaprenyl-pyrophosphoryl-MurNAc-pentapeptide (lipid intermediate I) to form undecaprenyl-pyrophosphoryl-MurNAc-(pentapeptide)GlcNAc (lipid intermediate II). In Shewanella putrefaciens (strain CN-32 / ATCC BAA-453), this protein is UDP-N-acetylglucosamine--N-acetylmuramyl-(pentapeptide) pyrophosphoryl-undecaprenol N-acetylglucosamine transferase.